The chain runs to 424 residues: Histidine--tRNA ligase (424 aa).

Belongs to the class-II aminoacyl-tRNA synthetase family. In terms of assembly, homodimer.

It is found in the cytoplasm. The enzyme catalyses tRNA(His) + L-histidine + ATP = L-histidyl-tRNA(His) + AMP + diphosphate + H(+). This Shewanella sediminis (strain HAW-EB3) protein is Histidine--tRNA ligase.